A 359-amino-acid polypeptide reads, in one-letter code: MKAAAITPGKKDSLRVIDVDRPRPGAGEVLVRMLEAGVCGTDEELNLGIIGEAPAGSDYLIIGHENLGVVEEAGKDVRAFRKGDLVVATVRRSCPGMCFACRTGQPDMCDSDDYLERGIKGMHGYMAEYYTERPENLIPVPQSLRKVAVLLEPLSIVEKGIEQAFKIQERMIWRPRRALVAGAGPIGLLAALILRDVGLEVSTFATRSRESLKARIAEAAGIEYFNVKETPIEQIAELQGPLDMIVEATGSSEIAFKAIGLTDSNGIVCLTGLSPEQRTHSVCTDCVNQDLVMHNKAVFGTVSSNRVHFERGIDRLTSIERRWPGLLERMFSRRVRLENVKEGLKGDKEDVKVLVEIGA.

Residue Cys-39 participates in Zn(2+) binding. Substrate is bound at residue Thr-41. Residues His-64 and Glu-65 each coordinate Zn(2+). The substrate site is built by Glu-116 and Glu-152. Residue Glu-152 participates in Zn(2+) binding. 183 to 186 (AGPI) contributes to the NADP(+) binding site.

It belongs to the zinc-containing alcohol dehydrogenase family. Glucose 1-dehydrogenase subfamily. Requires Zn(2+) as cofactor.

The catalysed reaction is D-glucose + NAD(+) = D-glucono-1,5-lactone + NADH + H(+). The enzyme catalyses D-glucose + NADP(+) = D-glucono-1,5-lactone + NADPH + H(+). Its function is as follows. Catalyzes the NAD(P)(+)-dependent oxidation of D-glucose to D-gluconate via gluconolactone. Can utilize both NAD(+) and NADP(+) as electron acceptor. Is involved in the degradation of glucose through a non-phosphorylative variant of the Entner-Doudoroff pathway. The protein is Glucose 1-dehydrogenase of Methanocella arvoryzae (strain DSM 22066 / NBRC 105507 / MRE50).